A 396-amino-acid polypeptide reads, in one-letter code: MTTGKTAPRRLSIFGSTGSIGRNTLNVVEHLGGRDNFEISVLTGNGNVELLARQAKASGARLAVTASDRHYDSLKSALSGSGIAVASGKSGLMEAADCEADWVMAAIVGTAGLAPTLAAARRGADIALANKECLVSAGDLFLKSIREGGGRLLPVDSEHNAIFQVLEENQRHAVERVVLTASGGPFRTASLKEMADVTVETARAHPNWSMGLKISIDSASMFNKALEMIEARHLFGLTPDQIEVILHPQSIIHSMVGYTDGSVLAQLGAPDMRTAIGYALSFPRRPNLPIERLDFARLARLDFEAPDEVRFPALRLARLAMTRGGVQGAVLNGAKEVALEAFIAGRLSFLAMADITERVMDDLAHLPPAAEMDDVFSADSQARQRASQLMKLDLVG.

NADPH contacts are provided by T17, G18, S19, I20, N47, and N130. K131 contributes to the 1-deoxy-D-xylulose 5-phosphate binding site. E132 contacts NADPH. Position 156 (D156) interacts with Mn(2+). 1-deoxy-D-xylulose 5-phosphate-binding residues include S157, E158, S182, and H205. Residue E158 participates in Mn(2+) binding. G211 provides a ligand contact to NADPH. 1-deoxy-D-xylulose 5-phosphate is bound by residues S218, N223, K224, and E227. E227 contacts Mn(2+).

The protein belongs to the DXR family. Mg(2+) is required as a cofactor. Requires Mn(2+) as cofactor.

It catalyses the reaction 2-C-methyl-D-erythritol 4-phosphate + NADP(+) = 1-deoxy-D-xylulose 5-phosphate + NADPH + H(+). The protein operates within isoprenoid biosynthesis; isopentenyl diphosphate biosynthesis via DXP pathway; isopentenyl diphosphate from 1-deoxy-D-xylulose 5-phosphate: step 1/6. Functionally, catalyzes the NADPH-dependent rearrangement and reduction of 1-deoxy-D-xylulose-5-phosphate (DXP) to 2-C-methyl-D-erythritol 4-phosphate (MEP). This chain is 1-deoxy-D-xylulose 5-phosphate reductoisomerase, found in Rhizobium etli (strain CIAT 652).